The chain runs to 130 residues: ATP synthase epsilon chain (130 aa).

Belongs to the ATPase epsilon chain family. F-type ATPases have 2 components, CF(1) - the catalytic core - and CF(0) - the membrane proton channel. CF(1) has five subunits: alpha(3), beta(3), gamma(1), delta(1), epsilon(1). CF(0) has three main subunits: a, b and c.

The protein localises to the cell inner membrane. Functionally, produces ATP from ADP in the presence of a proton gradient across the membrane. This Campylobacter hominis (strain ATCC BAA-381 / DSM 21671 / CCUG 45161 / LMG 19568 / NCTC 13146 / CH001A) protein is ATP synthase epsilon chain.